The sequence spans 124 residues: Sporulation initiation phosphotransferase F (124 aa).

A Response regulatory domain is found at K5–L119. Residues D10, D11, D54, and K56 each coordinate Mg(2+). 4-aspartylphosphate is present on D54.

Requires Mg(2+) as cofactor. Phosphorylated by KinA and KinB. Dephosphorylated by RapA and RapB.

Its subcellular location is the cytoplasm. Key element in the phosphorelay regulating sporulation initiation. Phosphorylation of spo0B during sporulation initiation. This is Sporulation initiation phosphotransferase F (spo0F) from Bacillus subtilis (strain 168).